We begin with the raw amino-acid sequence, 292 residues long: Probable endonuclease 4 (292 aa).

Positions 71, 111, 148, 182, 185, 217, 230, 232, and 262 each coordinate Zn(2+).

Belongs to the AP endonuclease 2 family. It depends on Zn(2+) as a cofactor.

It carries out the reaction Endonucleolytic cleavage to 5'-phosphooligonucleotide end-products.. Functionally, endonuclease IV plays a role in DNA repair. It cleaves phosphodiester bonds at apurinic or apyrimidinic (AP) sites, generating a 3'-hydroxyl group and a 5'-terminal sugar phosphate. The chain is Probable endonuclease 4 from Aster yellows witches'-broom phytoplasma (strain AYWB).